Reading from the N-terminus, the 606-residue chain is NADH-ubiquinone oxidoreductase chain 5 (606 aa).

A run of 16 helical transmembrane segments spans residues 1–21 (MNPF…PIMM), 43–63 (AFTL…EMII), 87–107 (VMFI…SMWY), 112–132 (PFIN…MILV), 137–157 (LFQL…LIGW), 171–191 (AILY…WFLT), 213–233 (LIGL…HPWL), 241–261 (TPVS…FLLI), 273–293 (VQTM…LCAI), 301–321 (IVAF…GINQ), 324–344 (LAFL…MCSG), 366–386 (MPFT…MPYL), 407–429 (WALL…IIFF), 457–477 (LLIG…PMTV), 482–502 (MPLY…MLAL), and 582–602 (GLIK…MTLF).

The protein belongs to the complex I subunit 5 family. In terms of assembly, core subunit of respiratory chain NADH dehydrogenase (Complex I) which is composed of 45 different subunits.

The protein resides in the mitochondrion inner membrane. The catalysed reaction is a ubiquinone + NADH + 5 H(+)(in) = a ubiquinol + NAD(+) + 4 H(+)(out). Core subunit of the mitochondrial membrane respiratory chain NADH dehydrogenase (Complex I) which catalyzes electron transfer from NADH through the respiratory chain, using ubiquinone as an electron acceptor. Essential for the catalytic activity and assembly of complex I. This chain is NADH-ubiquinone oxidoreductase chain 5 (MT-ND5), found in Sus scrofa (Pig).